Here is a 913-residue protein sequence, read N- to C-terminus: Protein translocase subunit SecA (913 aa).

ATP is bound by residues glutamine 87, 105–109, and aspartate 512; that span reads GEGKT. The interval 864–913 is disordered; that stretch reads LDQPEEEPAEVEGQPDVAVASVRTEPKIGRNEPCPCGSGKKYKHCHGQVQ. Positions 897, 899, 908, and 909 each coordinate Zn(2+). The span at 903–913 shows a compositional bias: basic residues; sequence KKYKHCHGQVQ.

The protein belongs to the SecA family. As to quaternary structure, monomer and homodimer. Part of the essential Sec protein translocation apparatus which comprises SecA, SecYEG and auxiliary proteins SecDF-YajC and YidC. Requires Zn(2+) as cofactor.

The protein localises to the cell inner membrane. It localises to the cytoplasm. It carries out the reaction ATP + H2O + cellular proteinSide 1 = ADP + phosphate + cellular proteinSide 2.. In terms of biological role, part of the Sec protein translocase complex. Interacts with the SecYEG preprotein conducting channel. Has a central role in coupling the hydrolysis of ATP to the transfer of proteins into and across the cell membrane, serving both as a receptor for the preprotein-SecB complex and as an ATP-driven molecular motor driving the stepwise translocation of polypeptide chains across the membrane. The chain is Protein translocase subunit SecA from Stutzerimonas stutzeri (strain A1501) (Pseudomonas stutzeri).